The primary structure comprises 222 residues: N-(5'-phosphoribosyl)anthranilate isomerase (222 aa).

The protein belongs to the TrpF family.

It carries out the reaction N-(5-phospho-beta-D-ribosyl)anthranilate = 1-(2-carboxyphenylamino)-1-deoxy-D-ribulose 5-phosphate. The protein operates within amino-acid biosynthesis; L-tryptophan biosynthesis; L-tryptophan from chorismate: step 3/5. In Gloeobacter violaceus (strain ATCC 29082 / PCC 7421), this protein is N-(5'-phosphoribosyl)anthranilate isomerase.